A 474-amino-acid polypeptide reads, in one-letter code: Coiled-coil domain-containing protein 174 (474 aa).

Disordered stretches follow at residues 39–86 (GVFG…REKL) and 129–170 (GATR…PSEE). 2 stretches are compositionally biased toward basic and acidic residues: residues 64–86 (RAEK…REKL) and 129–142 (GATR…ERDA). Residues 64–98 (RAEKDAEQKLEEQKTLDKSREKLEEKAKLYEKMTK) adopt a coiled-coil conformation. Positions 148-157 (NDDDDEEEFS) are enriched in acidic residues. Residue Ser-206 is modified to Phosphoserine. A coiled-coil region spans residues 276–317 (LEMLREQTTDQRIKRENIKEKRKAILEARLAKLRQKKMKKSK). 2 disordered regions span residues 309–372 (RQKK…IREW) and 389–461 (ELRA…VTFQ). Composition is skewed to basic and acidic residues over residues 316-327 (SKVDGTEEESRA) and 356-372 (IQER…IREW). Over residues 410–419 (RTGSLSSQPW) the composition is skewed to polar residues. A compositionally biased stretch (low complexity) spans 430–453 (GHSSGQSQEPSSSHTSTPASESSP).

Its subcellular location is the nucleus. Probably involved in neuronal development. The chain is Coiled-coil domain-containing protein 174 (Ccdc174) from Rattus norvegicus (Rat).